Here is a 264-residue protein sequence, read N- to C-terminus: Phosphatidylglycerol--prolipoprotein diacylglyceryl transferase (264 aa).

Transmembrane regions (helical) follow at residues 14-34 (IIFSIGPIALRWYGLMYLIGF), 60-80 (LIYTCFWGVILGGRIGDVFFY), 98-118 (GGMSFHGGLIGVIVAMIWVSF), 128-148 (ADFIAPLIPFGLGMGRIGNFI), 176-196 (SQLYEFFLEGVVLFFILNWFI), 203-223 (GSVAGLFLIGYGVFRFLVEYV), and 240-260 (GQLLSLPMIIGGLAIMIWAYS). R143 is an a 1,2-diacyl-sn-glycero-3-phospho-(1'-sn-glycerol) binding site.

Belongs to the Lgt family.

The protein localises to the cell inner membrane. The catalysed reaction is L-cysteinyl-[prolipoprotein] + a 1,2-diacyl-sn-glycero-3-phospho-(1'-sn-glycerol) = an S-1,2-diacyl-sn-glyceryl-L-cysteinyl-[prolipoprotein] + sn-glycerol 1-phosphate + H(+). It functions in the pathway protein modification; lipoprotein biosynthesis (diacylglyceryl transfer). Catalyzes the transfer of the diacylglyceryl group from phosphatidylglycerol to the sulfhydryl group of the N-terminal cysteine of a prolipoprotein, the first step in the formation of mature lipoproteins. The protein is Phosphatidylglycerol--prolipoprotein diacylglyceryl transferase of Actinobacillus pleuropneumoniae serotype 7 (strain AP76).